Consider the following 126-residue polypeptide: Large ribosomal subunit protein bL19 (126 aa).

Belongs to the bacterial ribosomal protein bL19 family.

Its function is as follows. This protein is located at the 30S-50S ribosomal subunit interface and may play a role in the structure and function of the aminoacyl-tRNA binding site. This chain is Large ribosomal subunit protein bL19, found in Gluconacetobacter diazotrophicus (strain ATCC 49037 / DSM 5601 / CCUG 37298 / CIP 103539 / LMG 7603 / PAl5).